The chain runs to 89 residues: Arminin 375 (89 aa).

A signal peptide spans 1 to 18 (MKAVFAILFLAFIALTYA). A propeptide spanning residues 19 to 57 (KSYDEVKEEIKNEVEREIFEDLEEESDELDNYVEESNDA) is cleaved from the precursor. Alanine amide is present on Ala-86.

Belongs to the arminin family. Expressed in entodermal epithelium along the body column.

The protein localises to the secreted. The protein resides in the target cell membrane. In terms of biological role, antimicrobial peptide with a broad-spectrum antimicrobial activity. Keeps its antibacterial activity under a wide range of salt concentrations that mimic physiological conditions of human blood, which is surprising, since Hydra is an obligate freshwater animal with nearly no salt tolerance. Does not affect red blood cells. This Hydra oligactis (Brown hydra) protein is Arminin 375.